We begin with the raw amino-acid sequence, 275 residues long: Putative pyruvate, phosphate dikinase regulatory protein (275 aa).

Residue 151-158 coordinates ADP; the sequence is GVSRTSKT.

This sequence belongs to the pyruvate, phosphate/water dikinase regulatory protein family. PDRP subfamily.

It catalyses the reaction N(tele)-phospho-L-histidyl/L-threonyl-[pyruvate, phosphate dikinase] + ADP = N(tele)-phospho-L-histidyl/O-phospho-L-threonyl-[pyruvate, phosphate dikinase] + AMP + H(+). The catalysed reaction is N(tele)-phospho-L-histidyl/O-phospho-L-threonyl-[pyruvate, phosphate dikinase] + phosphate + H(+) = N(tele)-phospho-L-histidyl/L-threonyl-[pyruvate, phosphate dikinase] + diphosphate. In terms of biological role, bifunctional serine/threonine kinase and phosphorylase involved in the regulation of the pyruvate, phosphate dikinase (PPDK) by catalyzing its phosphorylation/dephosphorylation. The protein is Putative pyruvate, phosphate dikinase regulatory protein of Rhodospirillum rubrum (strain ATCC 11170 / ATH 1.1.1 / DSM 467 / LMG 4362 / NCIMB 8255 / S1).